Reading from the N-terminus, the 337-residue chain is Quinolinate synthase (337 aa).

The iminosuccinate site is built by His-38 and Ser-59. A [4Fe-4S] cluster-binding site is contributed by Cys-104. Iminosuccinate-binding positions include 130–132 (YAN) and Ser-147. [4Fe-4S] cluster is bound at residue Cys-191. Residues 217–219 (HPE) and Thr-234 each bind iminosuccinate. Cys-288 serves as a coordination point for [4Fe-4S] cluster.

The protein belongs to the quinolinate synthase family. Type 1 subfamily. The cofactor is [4Fe-4S] cluster.

The protein resides in the cytoplasm. The catalysed reaction is iminosuccinate + dihydroxyacetone phosphate = quinolinate + phosphate + 2 H2O + H(+). The protein operates within cofactor biosynthesis; NAD(+) biosynthesis; quinolinate from iminoaspartate: step 1/1. Its function is as follows. Catalyzes the condensation of iminoaspartate with dihydroxyacetone phosphate to form quinolinate. This Wigglesworthia glossinidia brevipalpis protein is Quinolinate synthase.